The sequence spans 209 residues: Orotate phosphoribosyltransferase (209 aa).

5-phospho-alpha-D-ribose 1-diphosphate is bound by residues Arg96, Lys100, His102, and 122 to 130; that span reads EDLISTGGS. Ser126 is an orotate binding site.

It belongs to the purine/pyrimidine phosphoribosyltransferase family. PyrE subfamily. Homodimer. Mg(2+) serves as cofactor.

It catalyses the reaction orotidine 5'-phosphate + diphosphate = orotate + 5-phospho-alpha-D-ribose 1-diphosphate. The protein operates within pyrimidine metabolism; UMP biosynthesis via de novo pathway; UMP from orotate: step 1/2. Its function is as follows. Catalyzes the transfer of a ribosyl phosphate group from 5-phosphoribose 1-diphosphate to orotate, leading to the formation of orotidine monophosphate (OMP). This Streptococcus pyogenes serotype M3 (strain ATCC BAA-595 / MGAS315) protein is Orotate phosphoribosyltransferase.